A 158-amino-acid polypeptide reads, in one-letter code: Hypoxanthine DNA glycosylase (158 aa).

The active site involves N39.

It belongs to the uracil-DNA glycosylase (UDG) superfamily. Type 6 (HDG) family.

Functionally, excises hypoxanthine, a deamination product of adenine, from double-stranded DNA. Acts on double-stranded DNA containing G/I, T/I, A/I and C/I base pairs, but not on single-stranded inosine-containing DNA. Also has minor xanthine DNA glycosylase activity. Lacks any detectable uracil-DNA glycosylase activity. The polypeptide is Hypoxanthine DNA glycosylase (Methanosarcina acetivorans (strain ATCC 35395 / DSM 2834 / JCM 12185 / C2A)).